Consider the following 197-residue polypeptide: dITP/XTP pyrophosphatase (197 aa).

8–13 serves as a coordination point for substrate; sequence TGNAGK. Mg(2+) is bound by residues Glu-40 and Asp-69. Asp-69 acts as the Proton acceptor in catalysis. Substrate is bound by residues Ser-70, 154–157, Lys-177, and 182–183; these read FGYD and HR.

It belongs to the HAM1 NTPase family. In terms of assembly, homodimer. The cofactor is Mg(2+).

It carries out the reaction XTP + H2O = XMP + diphosphate + H(+). The enzyme catalyses dITP + H2O = dIMP + diphosphate + H(+). It catalyses the reaction ITP + H2O = IMP + diphosphate + H(+). Functionally, pyrophosphatase that catalyzes the hydrolysis of nucleoside triphosphates to their monophosphate derivatives, with a high preference for the non-canonical purine nucleotides XTP (xanthosine triphosphate), dITP (deoxyinosine triphosphate) and ITP. Seems to function as a house-cleaning enzyme that removes non-canonical purine nucleotides from the nucleotide pool, thus preventing their incorporation into DNA/RNA and avoiding chromosomal lesions. The protein is dITP/XTP pyrophosphatase (rdgB) of Salmonella paratyphi A (strain ATCC 9150 / SARB42).